Here is a 225-residue protein sequence, read N- to C-terminus: Peroxiredoxin-2E-2, chloroplastic (225 aa).

The N-terminal 42 residues, 1 to 42 (MAAPTAAALSTLSTASVTSGKRFITSSFSLSFSSRPLATGVR), are a transit peptide targeting the chloroplast. A Thioredoxin domain is found at 63–225 (IAVGDKLPDA…SSAEEMLKAL (163 aa)). Cysteine 111 acts as the Cysteine sulfenic acid (-SOH) intermediate in catalysis.

Belongs to the peroxiredoxin family. Prx5 subfamily. In terms of assembly, monomer.

It is found in the plastid. The protein resides in the chloroplast stroma. It carries out the reaction [glutaredoxin]-dithiol + a hydroperoxide = [glutaredoxin]-disulfide + an alcohol + H2O. In terms of biological role, thiol-specific peroxidase that catalyzes the reduction of hydrogen peroxide and organic hydroperoxides to water and alcohols, respectively. Plays a role in cell protection against oxidative stress by detoxifying peroxides. May be involved in chloroplast redox homeostasis. In Oryza sativa subsp. japonica (Rice), this protein is Peroxiredoxin-2E-2, chloroplastic (PRXIIE-2).